Reading from the N-terminus, the 222-residue chain is MIF4G domain-containing protein B (222 aa).

Positions 3 to 205 (NSSKEDYKIQ…LEILEFRAGG (203 aa)) constitute an MIF4G domain.

Belongs to the MIF4GD family. Interacts with eif4g1, eif4g2 and slbp; probably tethered by SLBP to the 3'-end of mRNAs ending with the histone stem-loop, it also interacts with eif4g1 which is bound to their 5'-end.

The protein localises to the cytoplasm. It is found in the nucleus. Functionally, functions in replication-dependent translation of histone mRNAs which differ from other eukaryotic mRNAs in that they do not end with a poly-A tail but a stem-loop. May participate in circularizing those mRNAs specifically enhancing their translation. The sequence is that of MIF4G domain-containing protein B (mif4gdb) from Danio rerio (Zebrafish).